The primary structure comprises 381 residues: Magnesium transporter MRS2-I (381 aa).

Helical transmembrane passes span 316–336 (LFLSSGTVCLSLYSLVAGIFG) and 353–373 (WVVLVSGLFCAFMFVSIVAYA). Positions 336–338 (GMN) match the Required for magnesium transport activity motif.

It belongs to the CorA metal ion transporter (MIT) (TC 1.A.35.5) family.

Its subcellular location is the membrane. Its function is as follows. Magnesium transporter that may mediate the influx of magnesium. This is Magnesium transporter MRS2-I (MRS2-I) from Oryza sativa subsp. indica (Rice).